A 139-amino-acid polypeptide reads, in one-letter code: uncharacterized protein (139 aa).

This is an uncharacterized protein from Invertebrate iridescent virus 6 (IIV-6).